Here is a 639-residue protein sequence, read N- to C-terminus: Transcription factor phomR' (639 aa).

The zn(2)-C6 fungal-type DNA-binding region spans 14-41; that stretch reads CWTCRLRRKKCNEGGPPCDNCEARGIHC. Disordered stretches follow at residues 58 to 136 and 476 to 499; these read REEA…AGTG and LPRS…TGPE. Residues 68 to 108 are compositionally biased toward low complexity; it reads SGRGRSYSRSSSTAAAAAPKPAEGAMVTGGSSSSSRGSGSS.

The protein localises to the nucleus. Its function is as follows. Transcription factor; part of the gene cluster that mediates the biosynthesis of the phomopsins, a group of hexapeptide mycotoxins which infects lupins and causes lupinosis disease in livestock. May play a role in the regulation of the production of phomopsins. The chain is Transcription factor phomR' from Diaporthe leptostromiformis (Lupinosis disease fungus).